The following is a 278-amino-acid chain: Ras-related protein Rab-40B (278 aa).

The GTP site is built by serine 23, glycine 26, and lysine 27. Residues 41–49 (SPYGHPAGI) form a switch-I region. Aspartate 69 is a Mg(2+) binding site. 3 residues coordinate GTP: glycine 72, asparagine 126, and arginine 127. Positions 72-88 (GQGRFCTIFRSYSRGAQ) are switch-II. The SOCS box domain maps to 175-228 (LLRHGMDRLWRPSKVLSLQDLCCRAVVSCTPVHLVDKLPLPIALRSHLKSFSMA). Residues 242 to 278 (SLTTSSTHKRSSLRKVKLVRPPQSPPKNCTRNSCKIS) are disordered. The segment covering 248 to 259 (THKRSSLRKVKL) has biased composition (basic residues). A compositionally biased stretch (polar residues) spans 267–278 (PKNCTRNSCKIS). Cysteine 270 carries S-palmitoyl cysteine lipidation. A lipid anchor (S-geranylgeranyl cysteine) is attached at cysteine 275.

This sequence belongs to the small GTPase superfamily. Rab family. As to quaternary structure, component of the cullin-5-RING E3 ubiquitin-protein ligase complex (ECS(RAB40B) complex) composed of CUL5, Elongin BC (ELOB and ELOC), RNF7/RBX2 and RAB40B; RAB40B interaction with ECS complex is GTP-independent. Binds (GTP-bound) LIMA1; interaction promotes LIMA1 subcellular localization in lamellipodia during cell migration. Interacts (GTP-bound) with TKS5/SH3PXD2A (via PX domain); interaction promotes invadopodia-mediated extracellular matrix degradation. The cofactor is Mg(2+).

Its subcellular location is the cell membrane. It is found in the cytoplasm. The protein resides in the cytosol. It localises to the cell projection. The protein localises to the lamellipodium membrane. Its subcellular location is the ruffle. It catalyses the reaction GTP + H2O = GDP + phosphate + H(+). The protein operates within protein modification; protein ubiquitination. With respect to regulation, regulated by guanine nucleotide exchange factors (GEFs) which promote the exchange of bound GDP for free GTP. Regulated by GTPase activating proteins (GAPs) which increase the GTP hydrolysis activity. Inhibited by GDP dissociation inhibitors (GDIs). Functionally, RAB40B small GTPase acts as substrate-recognition components of the ECS(RAB40B) E3 ubiquitin ligase complex which mediates the ubiquitination of target proteins. The Rab40 subfamily belongs to the Rab family that are key regulators of intracellular membrane trafficking, from the formation of transport vesicles to their fusion with membranes. Rabs cycle between an inactive GDP-bound form and an active GTP-bound form that is able to recruit to membranes different sets of downstream effectors directly responsible for vesicle formation, movement, tethering and fusion. As part of the ECS(RAB40B) complex, GTP-bound RAB40B promotes LIMA1/EPLIN ubiquitination and degradation, thereby regulating leading-edge actin dynamics during cell migration. As part of the ECS(RAB40B) complex, GTP-bound RAB40B also ubiquitinates RAP2A GTPase which promotes its localization to lamellipodia and activation to drive cell migration. The ECS(RAB40B) complex does not mediate canonical ubiquitin-dependent degradation of RAP2. RAB40B also binds TKS5/SH3PXD2A effector independently from ECS complex to promote invadopodia-mediated extracellular matrix degradation. In Homo sapiens (Human), this protein is Ras-related protein Rab-40B.